A 137-amino-acid polypeptide reads, in one-letter code: Putative nickel-responsive regulator (137 aa).

Ni(2+) is bound by residues His78, His89, His91, and Cys97.

This sequence belongs to the transcriptional regulatory CopG/NikR family. Requires Ni(2+) as cofactor.

In terms of biological role, transcriptional regulator. The polypeptide is Putative nickel-responsive regulator (Syntrophus aciditrophicus (strain SB)).